A 589-amino-acid chain; its full sequence is Netrin-G2 (589 aa).

Positions M1 to G17 are cleaved as a signal peptide. 3 disulfide bridges follow: C22-C39, C61-C81, and C69-C77. A Laminin N-terminal domain is found at E35–R286. Positions C69 to L88 are NGL discriminant loop I. 2 N-linked (GlcNAc...) asparagine glycosylation sites follow: N122 and N128. Residues C171 and C195 are joined by a disulfide bond. Residues R201–A203 are NGL discriminant loop II. The tract at residues T264–Q267 is NGL discriminant loop III. Disulfide bonds link C287–C296, C289–C305, C307–C316, C319–C344, C413–C422, C415–C433, C436–C445, C448–C466, C469–C481, C471–C487, C489–C498, C501–C511, C516–C529, C523–C535, and C537–C546. Laminin EGF-like domains lie at C287 to A346, C413 to E468, and C469 to P513. N310 carries N-linked (GlcNAc...) asparagine glycosylation. N455 carries N-linked (GlcNAc...) asparagine glycosylation. An N-linked (GlcNAc...) asparagine glycan is attached at N482. Residue G566 is the site of GPI-anchor amidated glycine attachment. Positions I567–C589 are cleaved as a propeptide — removed in mature form.

As to quaternary structure, interacts with LRRC4. N-glycosylated. Expression is restricted primarily to neurons of the CNS, particularly in the cerebral cortex, habenular nucleus and superior colliculus. Low levels in lung, kidney, heart and spleen.

It localises to the cell membrane. Functionally, involved in controlling patterning and neuronal circuit formation at the laminar, cellular, subcellular and synaptic levels. Promotes neurite outgrowth of both axons and dendrites. This chain is Netrin-G2 (Ntng2), found in Mus musculus (Mouse).